Consider the following 67-residue polypeptide: Probable Sec-independent protein translocase protein TatE (67 aa).

Residues 4–21 traverse the membrane as a helical segment; the sequence is ISITKLLVVAALIVLVFG. Residues 43 to 67 form a disordered region; that stretch reads MNDDDTSVKKSAEEDVPADKISHKE.

The protein belongs to the TatA/E family. TatE subfamily.

It is found in the cell inner membrane. Functionally, part of the twin-arginine translocation (Tat) system that transports large folded proteins containing a characteristic twin-arginine motif in their signal peptide across membranes. TatE shares overlapping functions with TatA. This chain is Probable Sec-independent protein translocase protein TatE, found in Enterobacter lignolyticus (strain SCF1).